Here is a 61-residue protein sequence, read N- to C-terminus: Metallothionein-2D (61 aa).

Position 1 is an N-acetylmethionine (M1). The interval 1–29 is beta; the sequence is MDPNCSCATRDSCACASSCKCKECKCTSC. The a divalent metal cation site is built by C5, C7, C13, C15, C19, C21, C24, C26, C29, C33, C34, C36, C37, C41, C44, C48, C50, C57, C59, and C60. The tract at residues 30–61 is alpha; it reads KKSCCSCCPAGCTKCAQGCICKGASDKCSCCA.

It belongs to the metallothionein superfamily. Type 1 family. As to quaternary structure, monomer.

In terms of biological role, metallothioneins have a high content of cysteine residues that bind various heavy metals; these proteins are transcriptionally regulated by both heavy metals and glucocorticoids. The sequence is that of Metallothionein-2D from Oryctolagus cuniculus (Rabbit).